Reading from the N-terminus, the 388-residue chain is Calcium-binding and spermatid-specific protein 1 (388 aa).

The tract at residues 1-20 (MAEDGLPKIYSHPPAESTKT) is disordered. Threonine 280 bears the Phosphothreonine; by CK2 mark. A phosphoserine mark is found at serine 312 and serine 344.

It is found in the cytoplasm. It localises to the mitochondrion inner membrane. Its subcellular location is the cell projection. The protein localises to the cilium. The protein resides in the flagellum. It is found in the cytoplasmic vesicle. It localises to the secretory vesicle. Its subcellular location is the acrosome. Its function is as follows. Calcium-binding protein. Essential for maintaining the structural integrity of the sperm flagella. The polypeptide is Calcium-binding and spermatid-specific protein 1 (CABS1) (Bos taurus (Bovine)).